The sequence spans 150 residues: Large ribosomal subunit protein uL15 (150 aa).

The segment at 18-43 (IVGRGSSSGWGKTSGKGHKGQQARSG) is disordered.

It belongs to the universal ribosomal protein uL15 family. As to quaternary structure, part of the 50S ribosomal subunit.

Its function is as follows. Binds to the 23S rRNA. The protein is Large ribosomal subunit protein uL15 of Treponema denticola (strain ATCC 35405 / DSM 14222 / CIP 103919 / JCM 8153 / KCTC 15104).